The sequence spans 177 residues: Putative HVA22-like protein g (177 aa).

The tract at residues 145 to 165 is disordered; that stretch reads QSTPKSKAEEKKETTIPKLDD. Over residues 150–165 the composition is skewed to basic and acidic residues; it reads SKAEEKKETTIPKLDD.

This sequence belongs to the DP1 family.

The protein is Putative HVA22-like protein g (HVA22G) of Arabidopsis thaliana (Mouse-ear cress).